Consider the following 401-residue polypeptide: Tumor necrosis factor receptor superfamily member 11B (401 aa).

A signal peptide spans 1 to 21 (MNKWLCCALLVLLDIIEWTTQ). TNFR-Cys repeat units lie at residues 24–62 (LPPK…KTLC), 65–105 (CPDH…NRVC), 107–142 (CEEG…NTVC), and 145–185 (CPDG…DNVC). Disulfide bonds link Cys-41–Cys-54, Cys-44–Cys-62, Cys-65–Cys-80, Cys-83–Cys-97, Cys-87–Cys-105, Cys-107–Cys-118, Cys-124–Cys-142, and Cys-145–Cys-160. Asn-98 is a glycosylation site (N-linked (GlcNAc...) asparagine). N-linked (GlcNAc...) asparagine glycans are attached at residues Asn-165 and Asn-178. Cys-166 and Cys-185 are joined by a disulfide. 2 Death domains span residues 198–269 (DVTL…MVKK) and 283–365 (RHLG…THSL). Residue Asn-289 is glycosylated (N-linked (GlcNAc...) asparagine).

In terms of assembly, homodimer. Interacts with TNFSF10 and TNFSF11. Highly expressed in liver, lung, stomach, intestines and calvaria. Highly expressed in decidua and placenta, and in embryo.

Its subcellular location is the secreted. In terms of biological role, acts as a decoy receptor for TNFSF11/RANKL and thereby neutralizes its function in osteoclastogenesis. Inhibits the activation of osteoclasts and promotes osteoclast apoptosis in vitro. Bone homeostasis seems to depend on the local ratio between TNFSF11 and TNFRSF11B. May also play a role in preventing arterial calcification. May act as decoy receptor for TNFSF10/TRAIL and protect against apoptosis. TNFSF10/TRAIL binding blocks the inhibition of osteoclastogenesis. The chain is Tumor necrosis factor receptor superfamily member 11B (Tnfrsf11b) from Mus musculus (Mouse).